The sequence spans 209 residues: Putative tripartite motif-containing protein 61 (209 aa).

The RING-type zinc-finger motif lies at 16 to 57; it reads CPICLDYLKDPVTISCGHNFCLSCIIMSWKDLHDSFPCPFCH. The B box-type zinc-finger motif lies at 92 to 133; it reads EEKHVCKKHNQVLTFFCQKDLELLCPRCSLSTDHQHHCVWPI. Residues cysteine 97, histidine 100, cysteine 119, and histidine 125 each contribute to the Zn(2+) site.

The chain is Putative tripartite motif-containing protein 61 (TRIM61) from Homo sapiens (Human).